Here is a 94-residue protein sequence, read N- to C-terminus: Endoribonuclease VapD 2 (94 aa).

Belongs to the VapD ribonuclease family. As to quaternary structure, homodimer.

In terms of biological role, cleaves ssRNA, mostly between U:A. The sequence is that of Endoribonuclease VapD 2 from Riemerella anatipestifer (Moraxella anatipestifer).